A 235-amino-acid polypeptide reads, in one-letter code: Transmembrane emp24 domain-containing protein 9 (235 aa).

Positions 1–37 are cleaved as a signal peptide; it reads MAVELGVLLVRPRPGTGLGRVMRTLLLVLWLATRGSA. Topologically, residues 38-202 are lumenal; that stretch reads LYFHIGETEK…RQTSESTNQR (165 aa). The GOLD domain maps to 47–145; the sequence is KKCFIEEIPD…MLRVHLDIQV (99 aa). The tract at residues 121–160 is required for interaction with STX17; that stretch reads CLHSNSTKFSLFAGGMLRVHLDIQVGEHANDYAEIAAKDK. N-linked (GlcNAc...) asparagine glycosylation occurs at Asn-125. The stretch at 154 to 184 forms a coiled coil; that stretch reads EIAAKDKLSELQLRVRQLVEQVEQIQKEQNY. N6-acetyllysine is present on Lys-160. The helical transmembrane segment at 203-222 threads the bilayer; that stretch reads VLWWSILQTLILVAIGVWQM. Topologically, residues 223–235 are cytoplasmic; the sequence is RHLKSFFEAKKLV. The short motif at 228–229 is the COPII vesicle coat-binding element; sequence FF. The COPI vesicle coat-binding motif lies at 228–235; the sequence is FFEAKKLV.

The protein belongs to the EMP24/GP25L family. As to quaternary structure, monomer and homodimer in endoplasmic reticulum. Predominantly monomeric and to lesser extent homodimeric in endoplasmic reticulum-Golgi intermediate compartment and cis-Golgi network. Probably oligomerizes with other members of the EMP24/GP25L family such as TMED2, TMED7 and TMED10. Interacts with TMED5. Interacts (via C-terminus) with COPG1; the interaction involves dimeric TMED9. Interacts with PTPN2 and SPAST. Interacts with STX17; the interaction is direct. Post-translationally, N-linked glycosylated containing high mannose.

The protein resides in the endoplasmic reticulum membrane. It localises to the golgi apparatus. The protein localises to the cis-Golgi network membrane. It is found in the endoplasmic reticulum-Golgi intermediate compartment membrane. Its subcellular location is the trans-Golgi network membrane. Functionally, appears to be involved in vesicular protein trafficking, mainly in the early secretory pathway. In COPI vesicle-mediated retrograde transport involved in the coatomer recruitment to membranes of the early secretory pathway. Increases coatomer-dependent activity of ARFGAP2. Thought to play a crucial role in the specific retention of p24 complexes in cis-Golgi membranes; specifically contributes to the coupled localization of TMED2 and TMED10 in the cis-Golgi network. May be involved in organization of intracellular membranes, such as of the ER-Golgi intermediate compartment and the Golgi apparatus. Involved in ER localization of PTPN2 isoform PTPB. In Homo sapiens (Human), this protein is Transmembrane emp24 domain-containing protein 9 (TMED9).